Consider the following 1374-residue polypeptide: DNA-directed RNA polymerase subunit beta (1374 aa).

This sequence belongs to the RNA polymerase beta chain family. As to quaternary structure, the RNAP catalytic core consists of 2 alpha, 1 beta, 1 beta' and 1 omega subunit. When a sigma factor is associated with the core the holoenzyme is formed, which can initiate transcription.

The catalysed reaction is RNA(n) + a ribonucleoside 5'-triphosphate = RNA(n+1) + diphosphate. Functionally, DNA-dependent RNA polymerase catalyzes the transcription of DNA into RNA using the four ribonucleoside triphosphates as substrates. The protein is DNA-directed RNA polymerase subunit beta of Acidovorax sp. (strain JS42).